Reading from the N-terminus, the 392-residue chain is Alanine--glyoxylate aminotransferase (392 aa).

Position 209 is an N6-(pyridoxal phosphate)lysine (K209). At K225 the chain carries N6-acetyllysine; alternate. The residue at position 225 (K225) is an N6-succinyllysine; alternate. K234 and K312 each carry N6-acetyllysine. R360 serves as a coordination point for substrate. The Microbody targeting signal signature appears at 390-392 (KKL).

This sequence belongs to the class-V pyridoxal-phosphate-dependent aminotransferase family. As to quaternary structure, homodimer. Pyridoxal 5'-phosphate serves as cofactor.

Its subcellular location is the peroxisome. It carries out the reaction L-serine + pyruvate = 3-hydroxypyruvate + L-alanine. The enzyme catalyses glyoxylate + L-alanine = glycine + pyruvate. In terms of biological role, peroxisomal aminotransferase that catalyzes the transamination of glyoxylate to glycine and contributes to the glyoxylate detoxification. Also catalyzes the transamination between L-serine and pyruvate and contributes to gluconeogenesis from the L-serine metabolism. This Pongo abelii (Sumatran orangutan) protein is Alanine--glyoxylate aminotransferase.